A 1885-amino-acid polypeptide reads, in one-letter code: Fatty acid synthase subunit alpha (1885 aa).

Positions 92–107 (PDPADLAPKETPKQEE) are enriched in basic and acidic residues. The interval 92–140 (PDPADLAPKETPKQEESTPSAPAAATPTPAAAAAPTPAPAPASAGPVES) is disordered. Positions 108–126 (STPSAPAAATPTPAAAAAP) are enriched in low complexity. Residues 146–221 (VKANLLIHVL…EQFQDSFSGQ (76 aa)) enclose the Carrier domain. An O-(pantetheine 4'-phosphoryl)serine modification is found at serine 181. The 541-residue stretch at 1121–1661 (IQEIVVQHDL…QKGAQAVVVH (541 aa)) folds into the Ketosynthase family 3 (KS3) domain. Catalysis depends on for beta-ketoacyl synthase activity residues cysteine 1304, histidine 1546, and histidine 1587. Aspartate 1771, valine 1772, and glutamate 1773 together coordinate Mg(2+). Acetyl-CoA-binding positions include 1771–1773 (DVE), tyrosine 1797, serine 1807, 1816–1826 (EAVFKALGVES), 1840–1843 (RDVN), and 1870–1872 (ISH). Mg(2+) contacts are provided by serine 1871 and histidine 1872.

This sequence belongs to the thiolase-like superfamily. Fungal fatty acid synthetase subunit alpha family. [Alpha(6)beta(6)] hexamers of two multifunctional subunits (alpha and beta).

The enzyme catalyses acetyl-CoA + n malonyl-CoA + 2n NADPH + 4n H(+) = a long-chain-acyl-CoA + n CoA + n CO2 + 2n NADP(+).. It carries out the reaction a fatty acyl-[ACP] + malonyl-[ACP] + H(+) = a 3-oxoacyl-[ACP] + holo-[ACP] + CO2. The catalysed reaction is a (3R)-hydroxyacyl-[ACP] + NADP(+) = a 3-oxoacyl-[ACP] + NADPH + H(+). Functionally, fatty acid synthetase catalyzes the formation of long-chain fatty acids from acetyl-CoA, malonyl-CoA and NADPH. The alpha subunit contains domains for: acyl carrier protein, 3-oxoacyl-[acyl-carrier-protein] reductase, and 3-oxoacyl-[acyl-carrier-protein] synthase. This is Fatty acid synthase subunit alpha (FAS2) from Candida albicans (Yeast).